The following is a 494-amino-acid chain: Aspartyl/glutamyl-tRNA(Asn/Gln) amidotransferase subunit B (494 aa).

The protein belongs to the GatB/GatE family. GatB subfamily. As to quaternary structure, heterotrimer of A, B and C subunits.

The enzyme catalyses L-glutamyl-tRNA(Gln) + L-glutamine + ATP + H2O = L-glutaminyl-tRNA(Gln) + L-glutamate + ADP + phosphate + H(+). It catalyses the reaction L-aspartyl-tRNA(Asn) + L-glutamine + ATP + H2O = L-asparaginyl-tRNA(Asn) + L-glutamate + ADP + phosphate + 2 H(+). In terms of biological role, allows the formation of correctly charged Asn-tRNA(Asn) or Gln-tRNA(Gln) through the transamidation of misacylated Asp-tRNA(Asn) or Glu-tRNA(Gln) in organisms which lack either or both of asparaginyl-tRNA or glutaminyl-tRNA synthetases. The reaction takes place in the presence of glutamine and ATP through an activated phospho-Asp-tRNA(Asn) or phospho-Glu-tRNA(Gln). In Rhodopseudomonas palustris (strain HaA2), this protein is Aspartyl/glutamyl-tRNA(Asn/Gln) amidotransferase subunit B.